Reading from the N-terminus, the 70-residue chain is Non-histone chromosomal protein H6 (70 aa).

The interval 1 to 70 (MPKRKSATKG…AAGDGAGNAK (70 aa)) is disordered. A compositionally biased stretch (basic residues) spans 30–45 (AKPKKAAAPKKAVKGK). Basic and acidic residues predominate over residues 46 to 57 (KAAENGDAKAEA).

It belongs to the HMGN family.

It localises to the nucleus. Its subcellular location is the secreted. Non-histone protein that probably binds to the inner side of nucleosomal DNA, altering the association between the DNA and the nucleosome octamer. Its function is as follows. Oncorhyncin III has antibacterial activity against Gram-positive and Gram-negative bacteria at submicromolar concentrations. This Oncorhynchus mykiss (Rainbow trout) protein is Non-histone chromosomal protein H6.